The following is a 151-amino-acid chain: UPF0178 protein CJA_1978 (151 aa).

The protein belongs to the UPF0178 family.

This chain is UPF0178 protein CJA_1978, found in Cellvibrio japonicus (strain Ueda107) (Pseudomonas fluorescens subsp. cellulosa).